We begin with the raw amino-acid sequence, 233 residues long: Large ribosomal subunit protein uL1 (233 aa).

The protein belongs to the universal ribosomal protein uL1 family. Part of the 50S ribosomal subunit.

Functionally, binds directly to 23S rRNA. The L1 stalk is quite mobile in the ribosome, and is involved in E site tRNA release. In terms of biological role, protein L1 is also a translational repressor protein, it controls the translation of the L11 operon by binding to its mRNA. The polypeptide is Large ribosomal subunit protein uL1 (Photobacterium profundum (strain SS9)).